Here is a 166-residue protein sequence, read N- to C-terminus: Large ribosomal subunit protein bL9 (166 aa).

Belongs to the bacterial ribosomal protein bL9 family.

In terms of biological role, binds to the 23S rRNA. This chain is Large ribosomal subunit protein bL9, found in Borrelia garinii subsp. bavariensis (strain ATCC BAA-2496 / DSM 23469 / PBi) (Borreliella bavariensis).